A 328-amino-acid chain; its full sequence is tRNA uridine(34) hydroxylase (328 aa).

In terms of domain architecture, Rhodanese spans 130 to 224 (LDEDTVVLDT…YGKDPEVQGE (95 aa)). Cysteine 184 acts as the Cysteine persulfide intermediate in catalysis.

It belongs to the TrhO family.

The enzyme catalyses uridine(34) in tRNA + AH2 + O2 = 5-hydroxyuridine(34) in tRNA + A + H2O. Catalyzes oxygen-dependent 5-hydroxyuridine (ho5U) modification at position 34 in tRNAs. This is tRNA uridine(34) hydroxylase from Streptococcus pyogenes serotype M6 (strain ATCC BAA-946 / MGAS10394).